A 1051-amino-acid chain; its full sequence is Kinesin-like protein KIN-UC (1051 aa).

3 stretches are compositionally biased toward low complexity: residues M1–S12, N28–S39, and S64–R90. Disordered stretches follow at residues M1 to S39 and P51 to V109. A Kinesin motor domain is found at R104–I441. G189–T196 contacts ATP. The D-BOX signature appears at R411–G419. 2 coiled-coil regions span residues D452–Q534 and D568–M761. Residues N753–S766 are compositionally biased toward basic and acidic residues. Residues N753–L788 form a disordered region. Polar residues predominate over residues S772 to L788. ARM repeat units follow at residues R792–A831, E833–M873, and E875–G915. Residues E917–K956 form an ARM 4; degenerate repeat.

Belongs to the TRAFAC class myosin-kinesin ATPase superfamily. Kinesin family. Ungrouped subfamily. As to quaternary structure, interacts (via C-terminus) with NEK5. As to expression, expressed in young root hair-forming cells and in root hair-producing cells at the boundary between the hypocotyl and root. Expressed in cotyledons, young leaves, trichomes and flowers.

The protein resides in the cytoplasm. It localises to the cytoskeleton. The protein localises to the spindle. It is found in the phragmoplast. In terms of biological role, acts as a plus-end microtubule-dependent motor protein. Involved in the control of root hair tip growth by promoting microtubule depolymerization and limiting the accumulation of endoplasmic microtubules. In vitro, binds to polymerized actin through ARM repeats, and to polymerized tubulin through N-terminal motor domain. The chain is Kinesin-like protein KIN-UC from Arabidopsis thaliana (Mouse-ear cress).